Consider the following 213-residue polypeptide: Probable transaldolase (213 aa).

The active-site Schiff-base intermediate with substrate is Lys83.

Belongs to the transaldolase family. Type 3B subfamily.

The protein localises to the cytoplasm. It catalyses the reaction D-sedoheptulose 7-phosphate + D-glyceraldehyde 3-phosphate = D-erythrose 4-phosphate + beta-D-fructose 6-phosphate. The protein operates within carbohydrate degradation; pentose phosphate pathway; D-glyceraldehyde 3-phosphate and beta-D-fructose 6-phosphate from D-ribose 5-phosphate and D-xylulose 5-phosphate (non-oxidative stage): step 2/3. Its function is as follows. Transaldolase is important for the balance of metabolites in the pentose-phosphate pathway. This chain is Probable transaldolase, found in Geobacillus kaustophilus (strain HTA426).